We begin with the raw amino-acid sequence, 345 residues long: Phosphate acyltransferase (345 aa).

The protein belongs to the PlsX family. In terms of assembly, homodimer. Probably interacts with PlsY.

Its subcellular location is the cytoplasm. The enzyme catalyses a fatty acyl-[ACP] + phosphate = an acyl phosphate + holo-[ACP]. It functions in the pathway lipid metabolism; phospholipid metabolism. Its function is as follows. Catalyzes the reversible formation of acyl-phosphate (acyl-PO(4)) from acyl-[acyl-carrier-protein] (acyl-ACP). This enzyme utilizes acyl-ACP as fatty acyl donor, but not acyl-CoA. This Thermodesulfovibrio yellowstonii (strain ATCC 51303 / DSM 11347 / YP87) protein is Phosphate acyltransferase.